We begin with the raw amino-acid sequence, 41 residues long: Submaxillary gland androgen-regulated protein 2, isoform beta (41 aa).

The N-terminal stretch at 1–22 (MKALYMVFVLWVLIGCFLRLLK) is a signal peptide.

It localises to the secreted. Functionally, may play a role in protection or detoxification. The chain is Submaxillary gland androgen-regulated protein 2, isoform beta (Smr2) from Mus musculus (Mouse).